The following is a 490-amino-acid chain: UDP-glycosyltransferase 84A1 (490 aa).

The active-site Proton acceptor is His30. His30 provides a ligand contact to an anthocyanidin. UDP-alpha-D-glucose-binding residues include Gln358, His373, Trp376, Asn377, Ser378, and Glu381. Residue Gly396 participates in an anthocyanidin binding. The UDP-alpha-D-glucose site is built by Asp397 and Gln398.

Belongs to the UDP-glycosyltransferase family. As to expression, expressed in roots, flowers and siliques.

It catalyses the reaction (E)-4-coumarate + UDP-alpha-D-glucose = 4-O-(beta-D-glucosyl)-trans-4-coumarate + UDP + H(+). The enzyme catalyses (E)-ferulate + UDP-alpha-D-glucose = 1-O-[(E)-feruloyl]-beta-D-glucose + UDP. The catalysed reaction is (E)-caffeate + UDP-alpha-D-glucose = 1-O-[(E)-caffeoyl]-beta-D-glucose + UDP. It carries out the reaction (E)-sinapate + UDP-alpha-D-glucose = 1-O-(trans-sinapoyl)-beta-D-glucose + UDP. It catalyses the reaction (E)-cinnamate + UDP-alpha-D-glucose = 1-O-(trans-cinnamoyl)-beta-D-glucose + UDP. Its function is as follows. UDP-glucosyltransferase that forms glucose esters with phenylpropanoids. Glucosylates 4-coumarate, ferulate, caffeate, sinapate and cinnamate. Can glucosylate the phytotoxic xenobiotic compound 2,4,5-trichlorophenol (TCP). The sequence is that of UDP-glycosyltransferase 84A1 from Arabidopsis thaliana (Mouse-ear cress).